A 336-amino-acid polypeptide reads, in one-letter code: Protein SGT1 homolog (336 aa).

Alanine 2 carries the post-translational modification N-acetylalanine. TPR repeat units lie at residues 11 to 44, 45 to 78, and 79 to 112; these read SQRL…NPDD, AQYY…NPNN, and CTAL…DSTD. The region spanning 140–229 is the CS domain; it reads QSKIKYDWYQ…PEAVRWEKLE (90 aa). A Phosphothreonine modification is found at threonine 236. The region spanning 247–336 is the SGS domain; it reads MYPSSSHYTR…PPDDMEWKQY (90 aa). The residue at position 252 (serine 252) is a Phosphoserine. The residue at position 255 (threonine 255) is a Phosphothreonine. A Glycyl lysine isopeptide (Lys-Gly) (interchain with G-Cter in SUMO1); alternate cross-link involves residue lysine 266. Lysine 266 is covalently cross-linked (Glycyl lysine isopeptide (Lys-Gly) (interchain with G-Cter in SUMO2); alternate). Serine 302 bears the Phosphoserine mark.

Belongs to the SGT1 family. As to quaternary structure, probably associates with SCF (SKP1-CUL1-F-box protein) complex through interaction with SKP1. Interacts with S100A6. Interacts with HSP90. Phosphorylated at Ser-252 and Ser-302, dephosphorylation promotes nuclear translocation, most likely due to disruption of the SUGT1-HSP90 complex.

Its subcellular location is the cytoplasm. The protein localises to the nucleus. Its function is as follows. May play a role in ubiquitination and subsequent proteasomal degradation of target proteins. The polypeptide is Protein SGT1 homolog (Mus musculus (Mouse)).